We begin with the raw amino-acid sequence, 586 residues long: Exocyst complex component EXO70A3 (586 aa).

Asparagine 65 and asparagine 106 each carry an N-linked (GlcNAc...) asparagine glycan. The segment at 119–149 (CLPSNLRPPSDDEGSDGKSHDPQSNGLGKTD) is disordered. A helical transmembrane segment spans residues 258-278 (FAEITTISFGMLLSFGYAIAI). Residues asparagine 321 and asparagine 487 are each glycosylated (N-linked (GlcNAc...) asparagine).

It belongs to the EXO70 family. As to quaternary structure, subunit of the exocyst complex. In terms of tissue distribution, confined to the outer layer of the columella cells in the root tips of young seedlings.

The protein localises to the membrane. In terms of biological role, component of the exocyst complex involved in the docking of exocytic vesicles with fusion sites on the plasma membrane during regulated or polarized secretion. Involved in PIN4 exocytosis and gravitropic responses in columella cells. By monitoring PIN4 distribution in columella cells, modulates auxin repartition and subsequently regulates the root system architecture (RSA), thus being a component of the auxin-dependent root directional growth (ARD). The sequence is that of Exocyst complex component EXO70A3 from Arabidopsis thaliana (Mouse-ear cress).